Here is a 167-residue protein sequence, read N- to C-terminus: Gametocyte-specific factor 1 (167 aa).

S8 carries the post-translational modification Phosphoserine. 2 consecutive CHHC U11-48K-type zinc fingers follow at residues 14–41 (LLQCPYDKNHQIRACRFPYHLIKCRKNH) and 48–75 (LATCPFNARHQVPRAEISHHISSCDDRS). Positions 17, 23, 33, 37, 51, 57, 67, and 71 each coordinate Zn(2+).

Belongs to the UPF0224 (FAM112) family.

The protein resides in the cytoplasm. In terms of biological role, required for spermatogenesis and is involved in the suppression of retrotransposon transcription in male germ cells. This chain is Gametocyte-specific factor 1 (GTSF1), found in Homo sapiens (Human).